The chain runs to 529 residues: GSFELTILHTNDVHARLEQTSRDSGKCTGEDCYGGVARRATKIRQIRASHRNVLLLDAGDQYQGTIWFNYYKGREVVHFMNSLRYDAMALGNHEFDNGLNGLLDPLLKNVKFPILSANIRPKGPIASNISGYILPYKIINVGSEKVGIIGYTTKETPVLSNPGPYLEFRDEVEELQKHADKLTTLGVNKIIALGHSGFMEDCRIAQKVKGVDVVVGGHTNTFLYTGSPPSNEVAAGNYPFMQLSDDGRQVPVVQAYAFGKYLGYLNVTFDDKGKVIKASGNPILLNKSIQEDPAVKAEISRMKVQLQNYSSQEIGRTIVYLNGTTHACRFHECNLGNLICDAVVYNNLRHPDDNEWNHVSMCIVNGGGIRSPIDEQANNGIITLEELTAVLPFGGTFDLLQIKGSTLRQAFEHSVHRHGQGTGELLQVSGIKVVYDLSQKPGKRVVSLNVLCTECRVPTYVPLEMEKTYKVLLPSFLAAGGDGYYMLKGDSSNHSSGDLDISIVGDYIKRMGKVFPAMEGRMVFSAGSL.

A signal peptide is located at residue glycine 1. The Zn(2+) site is built by aspartate 12 and histidine 14. Cysteine 27 and cysteine 32 form a disulfide bridge. Aspartate 60, asparagine 92, histidine 195, and histidine 218 together coordinate Zn(2+). N-linked (GlcNAc...) asparagine glycans are attached at residues asparagine 308 and asparagine 322. Disulfide bonds link cysteine 328-cysteine 333 and cysteine 340-cysteine 362. Residue arginine 329 coordinates AMP. Asparagine 365, arginine 370, and phenylalanine 393 together coordinate AMP. Cysteine 452 and cysteine 455 are joined by a disulfide. AMP-binding residues include phenylalanine 476 and aspartate 482. Residue serine 525 is the site of GPI-anchor amidated serine attachment. Residues 526–529 (AGSL) constitute a propeptide, removed in mature form.

This sequence belongs to the 5'-nucleotidase family. Requires Zn(2+) as cofactor. Post-translationally, venom 5'-nucleotidases (or a part thereof) may be released into the venom via exosome-like vesicles. They may be attached via a GPI anchor to the membrane of these vesicles. Soluble forms of 5'-nucleotidase might be released by cleavage of the ectodomain in the exosome-like vesicles or venom gland cells. As to expression, expressed by the venom gland.

The protein localises to the membrane. It catalyses the reaction a ribonucleoside 5'-phosphate + H2O = a ribonucleoside + phosphate. Functionally, hydrolyzes nucleotides into nucleosides. Snake venom 5'-nucleotidases are widely distributed among venomous snake taxa, but there is a lack of information about their biological activities. They have been shown to inhibit platelet aggregation. This effect may be due to the liberation of inhibitory AMP or adenosine by its action on ADP released upon initiation of aggregation. Venom 5'-nucleotidases are also known to synergistically act in vivo with other toxins like ADPases, phospholipases, and disintegrins to exert a more pronounced anti-coagulant effect. This Naja atra (Chinese cobra) protein is Snake venom 5'-nucleotidase.